We begin with the raw amino-acid sequence, 95 residues long: Integration host factor subunit beta (95 aa).

The protein belongs to the bacterial histone-like protein family. Heterodimer of an alpha and a beta chain.

In terms of biological role, this protein is one of the two subunits of integration host factor, a specific DNA-binding protein that functions in genetic recombination as well as in transcriptional and translational control. The protein is Integration host factor subunit beta of Shewanella pealeana (strain ATCC 700345 / ANG-SQ1).